We begin with the raw amino-acid sequence, 144 residues long: Transcriptional regulator SlyA (144 aa).

One can recognise an HTH marR-type domain in the interval 2–135 (ESPLGSDLAR…LIKLIAKLEH (134 aa)). The segment at residues 49-72 (QIQLAKAIGIEQPSLVRTLDQLED) is a DNA-binding region (H-T-H motif).

This sequence belongs to the SlyA family. In terms of assembly, homodimer.

The protein localises to the cytoplasm. In terms of biological role, transcription regulator that can specifically activate or repress expression of target genes. Required for virulence and survival in the macrophage environment. Probably activates the transcription of ssrB. Independently of ssrB activation, capable of stimulating the expression of virulence genes found on pathogenicity island 2 (SPI2). Probably activates expression of ispA, xseB genes, and of omp operon. The chain is Transcriptional regulator SlyA from Salmonella typhimurium (strain LT2 / SGSC1412 / ATCC 700720).